Reading from the N-terminus, the 550-residue chain is Hydroxylamine reductase (550 aa).

Residues Cys-3, Cys-6, Cys-18, and Cys-25 each coordinate [2Fe-2S] cluster. Hybrid [4Fe-2O-2S] cluster contacts are provided by His-249, Glu-273, Cys-317, Cys-405, Cys-433, Cys-458, Glu-492, and Lys-494. Position 405 is a cysteine persulfide (Cys-405).

Belongs to the HCP family. It depends on [2Fe-2S] cluster as a cofactor. Requires hybrid [4Fe-2O-2S] cluster as cofactor.

The protein resides in the cytoplasm. It catalyses the reaction A + NH4(+) + H2O = hydroxylamine + AH2 + H(+). In terms of biological role, catalyzes the reduction of hydroxylamine to form NH(3) and H(2)O. This Pectobacterium atrosepticum (strain SCRI 1043 / ATCC BAA-672) (Erwinia carotovora subsp. atroseptica) protein is Hydroxylamine reductase.